Consider the following 425-residue polypeptide: 3-isopropylmalate dehydratase large subunit (425 aa).

[4Fe-4S] cluster-binding residues include cysteine 306, cysteine 366, and cysteine 369.

Belongs to the aconitase/IPM isomerase family. LeuC type 2 subfamily. As to quaternary structure, heterodimer of LeuC and LeuD. It depends on [4Fe-4S] cluster as a cofactor.

It catalyses the reaction (2R,3S)-3-isopropylmalate = (2S)-2-isopropylmalate. Its pathway is amino-acid biosynthesis; L-leucine biosynthesis; L-leucine from 3-methyl-2-oxobutanoate: step 2/4. In terms of biological role, catalyzes the isomerization between 2-isopropylmalate and 3-isopropylmalate, via the formation of 2-isopropylmaleate. The polypeptide is 3-isopropylmalate dehydratase large subunit (Nautilia profundicola (strain ATCC BAA-1463 / DSM 18972 / AmH)).